The sequence spans 338 residues: tRNA-specific 2-thiouridylase MnmA (338 aa).

ATP is bound by residues Ala-6–Ser-13 and Met-32. Cys-92 (nucleophile) is an active-site residue. Cysteines 92 and 186 form a disulfide. An ATP-binding site is contributed by Gly-116. The interval Lys-134–Gln-136 is interaction with tRNA. The active-site Cysteine persulfide intermediate is the Cys-186. An interaction with tRNA region spans residues Arg-288–Tyr-289.

This sequence belongs to the MnmA/TRMU family.

Its subcellular location is the cytoplasm. The catalysed reaction is S-sulfanyl-L-cysteinyl-[protein] + uridine(34) in tRNA + AH2 + ATP = 2-thiouridine(34) in tRNA + L-cysteinyl-[protein] + A + AMP + diphosphate + H(+). Its function is as follows. Catalyzes the 2-thiolation of uridine at the wobble position (U34) of tRNA, leading to the formation of s(2)U34. This Campylobacter lari (strain RM2100 / D67 / ATCC BAA-1060) protein is tRNA-specific 2-thiouridylase MnmA.